Here is a 67-residue protein sequence, read N- to C-terminus: Andropin (67 aa).

The first 19 residues, 1–19 (MKYFLVLVVLTLILAISVG), serve as a signal peptide directing secretion.

This sequence belongs to the andropin family. Ejaculatory duct of adult males.

The protein localises to the secreted. Its function is as follows. Male-specific peptide with moderate activity against Gram-positive bacteria. This Drosophila orena (Fruit fly) protein is Andropin (Anp).